The sequence spans 493 residues: ATP synthase subunit beta, chloroplastic (493 aa).

Residue 170–177 (GGAGVGKT) participates in ATP binding.

It belongs to the ATPase alpha/beta chains family. In terms of assembly, F-type ATPases have 2 components, CF(1) - the catalytic core - and CF(0) - the membrane proton channel. CF(1) has five subunits: alpha(3), beta(3), gamma(1), delta(1), epsilon(1). CF(0) has four main subunits: a(1), b(1), b'(1) and c(9-12).

The protein localises to the plastid. The protein resides in the chloroplast thylakoid membrane. It carries out the reaction ATP + H2O + 4 H(+)(in) = ADP + phosphate + 5 H(+)(out). Functionally, produces ATP from ADP in the presence of a proton gradient across the membrane. The catalytic sites are hosted primarily by the beta subunits. The sequence is that of ATP synthase subunit beta, chloroplastic from Chaetosphaeridium globosum (Charophycean green alga).